A 926-amino-acid polypeptide reads, in one-letter code: Tyrosine-protein phosphatase non-receptor type 4 (926 aa).

The FERM domain occupies 29-312 (VVCNILLLDN…EHHTFFRLDR (284 aa)). 2 disordered regions span residues 380 to 412 (DDRLETQSLPSRSPPGTPNHRNSTFTQEGTRLR) and 430 to 475 (EVFV…KNSW). Composition is skewed to polar residues over residues 398–408 (NHRNSTFTQEG) and 430–456 (EVFVNQRSPSSTQANSIVLESSPSQET). Ser-474 is modified (phosphoserine). The PDZ domain occupies 517-589 (LIRMKPDENG…DQVVLFIKAS (73 aa)). A Tyrosine-protein phosphatase domain is found at 655–911 (VLTQFDQLYR…RFVCEAILKV (257 aa)). Substrate-binding positions include Asp-820, 852–858 (CSAGIGR), and Gln-896. The active-site Phosphocysteine intermediate is Cys-852.

Belongs to the protein-tyrosine phosphatase family. Non-receptor class subfamily. In terms of assembly, interacts with MAPK12 (via C-terminus); this interaction abolishes PTPN4 catalytic autoinhibition and thus activates the phosphatase activity. As to quaternary structure, (Microbial infection) Interacts with attenuated rabies virus protein G; this interaction is required for virally-induced apoptosis. Post-translationally, highly phosphorylated on serine and threonine residues but not on tyrosines. In terms of processing, cleaved and activated by calpain I/CAPN1.

It is found in the cell membrane. It localises to the cytoplasm. The protein localises to the cytoskeleton. It carries out the reaction O-phospho-L-tyrosyl-[protein] + H2O = L-tyrosyl-[protein] + phosphate. Functionally, phosphatase that plays a role in immunity, learning, synaptic plasticity or cell homeostasis. Regulates neuronal cell homeostasis by protecting neurons against apoptosis. Negatively regulates TLR4-induced interferon beta production by dephosphorylating adapter TICAM2 and inhibiting subsequent TRAM-TRIF interaction. Also dephosphorylates the immunoreceptor tyrosine-based activation motifs/ITAMs of the TCR zeta subunit and thereby negatively regulates TCR-mediated signaling pathway. May act at junctions between the membrane and the cytoskeleton. The sequence is that of Tyrosine-protein phosphatase non-receptor type 4 (PTPN4) from Homo sapiens (Human).